The chain runs to 196 residues: Ribosome maturation factor RimP (196 aa).

The segment covering 131–145 (KKKAGKKSQGKKAGK) has biased composition (basic residues). The tract at residues 131–153 (KKKAGKKSQGKKAGKKTPQAPVQ) is disordered.

This sequence belongs to the RimP family.

It is found in the cytoplasm. Required for maturation of 30S ribosomal subunits. In Corynebacterium urealyticum (strain ATCC 43042 / DSM 7109), this protein is Ribosome maturation factor RimP.